The sequence spans 236 residues: Phosphoribosylaminoimidazole-succinocarboxamide synthase (236 aa).

This sequence belongs to the SAICAR synthetase family.

The enzyme catalyses 5-amino-1-(5-phospho-D-ribosyl)imidazole-4-carboxylate + L-aspartate + ATP = (2S)-2-[5-amino-1-(5-phospho-beta-D-ribosyl)imidazole-4-carboxamido]succinate + ADP + phosphate + 2 H(+). It functions in the pathway purine metabolism; IMP biosynthesis via de novo pathway; 5-amino-1-(5-phospho-D-ribosyl)imidazole-4-carboxamide from 5-amino-1-(5-phospho-D-ribosyl)imidazole-4-carboxylate: step 1/2. This is Phosphoribosylaminoimidazole-succinocarboxamide synthase from Akkermansia muciniphila (strain ATCC BAA-835 / DSM 22959 / JCM 33894 / BCRC 81048 / CCUG 64013 / CIP 107961 / Muc).